Consider the following 198-residue polypeptide: Ribonuclease HII (198 aa).

The RNase H type-2 domain occupies 10-198 (QLVAGVDEVG…PVKRALGLAS (189 aa)). A divalent metal cation is bound by residues Asp-16, Glu-17, and Asp-108.

It belongs to the RNase HII family. Mn(2+) is required as a cofactor. The cofactor is Mg(2+).

It localises to the cytoplasm. The enzyme catalyses Endonucleolytic cleavage to 5'-phosphomonoester.. Its function is as follows. Endonuclease that specifically degrades the RNA of RNA-DNA hybrids. This chain is Ribonuclease HII, found in Escherichia coli O6:H1 (strain CFT073 / ATCC 700928 / UPEC).